We begin with the raw amino-acid sequence, 321 residues long: MTTFKQQTIKEKETKRKYCIKGTTANLTQTHPNGPVCVNRGEEVANTTTLLDSGGGINKKSLLQNLLSKCKTTFQQSFTNANITLKDEKWLKNVRTAYFVCDHDGSVELAYLPNVLPKELVEEFTEKFESIQTGRKKDTGYSGILDNSMPFNYVTADLSQELGQYLSEIVNPQINYYISKLLTCVSSRTINYLVSLNDSYYALNNCLYPSTAFNSLKPSNDGHRIRKPHKDNLDITPSSLFYFGNFQNTEGYLELTDKNCKVFVQPGDVLFFKGNEYKHVVANITSGWRIGLVYFAHKGSKTKPYYEDTQKNSLKIHKETK.

Residues aspartate 198 to lysine 298 form the Fe2OG dioxygenase domain. The 2-oxoglutarate site is built by asparagine 214 and arginine 224. Residues histidine 229 and aspartate 231 each coordinate Fe cation. Tyrosine 242 is a 2-oxoglutarate binding site. Histidine 279 is a binding site for Fe cation. Arginine 289 is a 2-oxoglutarate binding site. Glutamine 310 is a binding site for substrate.

Fe(2+) is required as a cofactor.

The catalysed reaction is a 5-methyl-2'-deoxycytidine in DNA + 2-oxoglutarate + O2 = a 5-hydroxymethyl-2'-deoxycytidine in DNA + succinate + CO2. It catalyses the reaction a 5-hydroxymethyl-2'-deoxycytidine in DNA + 2-oxoglutarate + O2 = a 5-formyl-2'-deoxycytidine in DNA + succinate + CO2 + H2O. The enzyme catalyses a 5-formyl-2'-deoxycytidine in DNA + 2-oxoglutarate + O2 = a 5-carboxyl-2'-deoxycytidine in DNA + succinate + CO2 + H(+). In terms of biological role, dioxygenase that catalyzes the conversion of the modified genomic base 5-methylcytosine (5mC) into 5-hydroxymethylcytosine (5hmC), and thereby plays a role in active DNA demethylation. Also mediates subsequent conversion of 5hmC into 5-formylcytosine (5fC), and conversion of 5fC to 5-carboxylcytosine (5caC). The polypeptide is Tet-like dioxygenase 1 (Naegleria gruberi (Amoeba)).